Reading from the N-terminus, the 187-residue chain is Basic helix-loop-helix transcription factor scleraxis (187 aa).

Disordered stretches follow at residues 21–83 and 140–163; these read LSED…TNSV and AFFH…QPKQ. Over residues 34–43 the composition is skewed to basic and acidic residues; the sequence is SDEKPFHLDA. A compositionally biased stretch (basic residues) spans 50–72; sequence AGKRRSGKKAGRLHREPRQRHTA. Positions 67–119 constitute a bHLH domain; the sequence is RQRHTANARERDRTNSVNTAFTALRTLIPTEPADRKLSKIETLRLASSYISHL.

As to quaternary structure, efficient DNA binding requires dimerization with another bHLH protein. Dimerizes and binds the E-box consensus sequence with E12. As to expression, expressed in the intersomitic, the superficial proximomedial limb mesenchyme and the subectodermal mesenchyme.

Its subcellular location is the nucleus. Functionally, plays an early essential role in mesoderm formation, as well as a later role in formation of somite-derived chondrogenic lineages. The protein is Basic helix-loop-helix transcription factor scleraxis (SCX) of Gallus gallus (Chicken).